Here is a 28-residue protein sequence, read N- to C-terminus: Conotoxin Cl5.3 (28 aa).

The protein belongs to the conotoxin T superfamily. In terms of processing, contains 2 disulfide bonds that can be either 'C1-C3, C2-C4' or 'C1-C4, C2-C3', since these disulfide connectivities have been observed for conotoxins with cysteine framework V (for examples, see AC P0DQQ7 and AC P81755). In terms of tissue distribution, expressed by the venom duct.

Its subcellular location is the secreted. The polypeptide is Conotoxin Cl5.3 (Californiconus californicus (California cone)).